A 191-amino-acid chain; its full sequence is Peptidyl-tRNA hydrolase (191 aa).

Y17 is a tRNA binding site. H22 functions as the Proton acceptor in the catalytic mechanism. TRNA contacts are provided by Y68, N70, and N116.

It belongs to the PTH family. As to quaternary structure, monomer.

The protein resides in the cytoplasm. It catalyses the reaction an N-acyl-L-alpha-aminoacyl-tRNA + H2O = an N-acyl-L-amino acid + a tRNA + H(+). Its function is as follows. Hydrolyzes ribosome-free peptidyl-tRNAs (with 1 or more amino acids incorporated), which drop off the ribosome during protein synthesis, or as a result of ribosome stalling. Functionally, catalyzes the release of premature peptidyl moieties from peptidyl-tRNA molecules trapped in stalled 50S ribosomal subunits, and thus maintains levels of free tRNAs and 50S ribosomes. In Mycobacterium avium (strain 104), this protein is Peptidyl-tRNA hydrolase.